The sequence spans 252 residues: Zinc finger CCCH domain-containing protein 28 (252 aa).

Positions 1 to 21 (MSHRRDYGSDAVHVRITHDPP) are enriched in basic and acidic residues. The segment at 1–31 (MSHRRDYGSDAVHVRITHDPPPENCFPNSGD) is disordered. 2 C3H1-type zinc fingers span residues 71 to 99 (FFKT…HSAE) and 143 to 171 (NWKT…HGPS).

The sequence is that of Zinc finger CCCH domain-containing protein 28 from Arabidopsis thaliana (Mouse-ear cress).